A 1161-amino-acid polypeptide reads, in one-letter code: PAN2-PAN3 deadenylation complex catalytic subunit pan2 (1161 aa).

WD repeat units lie at residues 20–59 (GLPT…RYTS) and 276–315 (ANVS…HFNE). Residues 316-452 (MSKEVEFADV…GAKLNGEAED (137 aa)) are linker. One can recognise a USP domain in the interval 453–822 (DPLLKYSNVE…SPCILAYQAK (370 aa)). The Exonuclease domain occupies 871-1049 (VALDTEFVDL…IEDARMALRL (179 aa)). Positions 874, 876, 983, and 1042 each coordinate a divalent metal cation. The stretch at 1009–1060 (NRRLSLRYLAWAVFKEYIQEEPADNNQGHDSIEDARMALRLWKKFQEYEDAG) is one WD 4 repeat. A disordered region spans residues 1092–1161 (RPGTAVTMQN…GDFFGGSPLK (70 aa)). Residues 1097-1110 (VTMQNSSGRNTPST) show a composition bias toward polar residues. Low complexity predominate over residues 1116-1129 (AATATATTSAPATP). A compositionally biased stretch (gly residues) spans 1145–1155 (TFGGPGAGDFF).

Belongs to the peptidase C19 family. PAN2 subfamily. In terms of assembly, forms a heterotrimer with an asymmetric homodimer of the regulatory subunit pan3 to form the poly(A)-nuclease (PAN) deadenylation complex. A divalent metal cation is required as a cofactor.

Its subcellular location is the cytoplasm. The catalysed reaction is Exonucleolytic cleavage of poly(A) to 5'-AMP.. Its activity is regulated as follows. Positively regulated by the regulatory subunit pan3. Catalytic subunit of the poly(A)-nuclease (PAN) deadenylation complex, one of two cytoplasmic mRNA deadenylases involved in mRNA turnover. PAN specifically shortens poly(A) tails of RNA and the activity is stimulated by poly(A)-binding protein pab1. PAN deadenylation is followed by rapid degradation of the shortened mRNA tails by the CCR4-NOT complex. Deadenylated mRNAs are then degraded by two alternative mechanisms, namely exosome-mediated 3'-5' exonucleolytic degradation, or deadenylation-dependent mRNA decaping and subsequent 5'-3' exonucleolytic degradation by xrn1. May also be involved in post-transcriptional maturation of mRNA poly(A) tails. The sequence is that of PAN2-PAN3 deadenylation complex catalytic subunit pan2 from Neosartorya fischeri (strain ATCC 1020 / DSM 3700 / CBS 544.65 / FGSC A1164 / JCM 1740 / NRRL 181 / WB 181) (Aspergillus fischerianus).